The primary structure comprises 930 residues: RNA-binding protein 10 (930 aa).

Basic and acidic residues-rich tracts occupy residues Met-1 to Gly-14 and Arg-21 to Pro-45. The disordered stretch occupies residues Met-1–Ala-127. At Glu-2 the chain carries N-acetylserine. Phosphoserine occurs at positions 30, 61, and 89. The span at Asp-59–Tyr-70 shows a compositional bias: acidic residues. Basic residues predominate over residues Arg-80–Ser-89. A compositionally biased stretch (basic and acidic residues) spans Arg-98–Gln-111. Over residues Gly-112–Glu-125 the composition is skewed to acidic residues. Positions Asn-129 to Pro-209 constitute an RRM 1 domain. The segment at Lys-212–Glu-242 adopts a RanBP2-type zinc-finger fold. In terms of domain architecture, RRM 2 spans Asp-300–Gly-384. Lys-383 is modified (N6-acetyllysine). Disordered stretches follow at residues Pro-466 to Ser-524, Ser-537 to Val-569, Glu-620 to Arg-685, and Lys-700 to Leu-753. Polar residues predominate over residues Tyr-508–Ser-524. The span at Ser-541–Ala-557 shows a compositional bias: low complexity. Basic and acidic residues-rich tracts occupy residues Ala-623–Lys-639, Lys-653–Phe-669, and Lys-700–Thr-709. Phosphoserine occurs at positions 718, 723, 733, 736, and 738. Over residues Glu-743–Leu-753 the composition is skewed to basic and acidic residues. The segment at Leu-759–His-784 adopts a C2H2-type; atypical zinc-finger fold. 2 positions are modified to phosphoserine: Ser-781 and Ser-797. The segment covering Arg-815 to Gly-826 has biased composition (basic and acidic residues). Residues Arg-815–Ile-861 are disordered. Residue Ser-845 is modified to Phosphoserine. Positions Ser-858–Ser-904 constitute a G-patch domain. Residue Arg-902 is modified to Omega-N-methylarginine.

In terms of assembly, associates with the spliceosome. Component of a large chromatin remodeling complex, at least composed of MYSM1, PCAF, RBM10 and KIF11/TRIP5.

The protein resides in the nucleus. In terms of biological role, binds to ssRNA containing the consensus sequence 5'-AGGUAA-3'. May be involved in post-transcriptional processing, most probably in mRNA splicing. Binds to RNA homopolymers, with a preference for poly(G) and poly(U) and little for poly(A). May bind to specific miRNA hairpins. This Homo sapiens (Human) protein is RNA-binding protein 10.